Here is a 64-residue protein sequence, read N- to C-terminus: Large ribosomal subunit protein bL33 (64 aa).

It belongs to the bacterial ribosomal protein bL33 family.

In Prochlorococcus marinus (strain MIT 9313), this protein is Large ribosomal subunit protein bL33.